Reading from the N-terminus, the 623-residue chain is Laccase-1 (623 aa).

Positions 1–22 are cleaved as a signal peptide; that stretch reads MKTFTSALALVVGMLAPGAVVA. The propeptide occupies 23–50; the sequence is APPSTPAQRDLVELREARQEGGKDLRPR. The cysteines at positions 54 and 62 are disulfide-linked. N-linked (GlcNAc...) asparagine glycans are attached at residues N89 and N138. Cu cation is bound by residues H143, H145, H188, and H190. Disulfide bonds link C164/C590 and C348/C382. N251, N266, N294, and N339 each carry an N-linked (GlcNAc...) asparagine glycan. N-linked (GlcNAc...) asparagine glycosylation is found at N426 and N446. Residues H481, H484, H486, H552, C553, H554, and H558 each contribute to the Cu cation site. Positions 610-623 are excised as a propeptide; that stretch reads KRRRWVEESEWLVR.

This sequence belongs to the multicopper oxidase family. As to quaternary structure, monomer. Cu cation is required as a cofactor. As to expression, secreted protein; extracellular space.

It catalyses the reaction 4 hydroquinone + O2 = 4 benzosemiquinone + 2 H2O. In terms of biological role, lignin degradation and detoxification of lignin-derived products. The polypeptide is Laccase-1 (LAC1) (Melanocarpus albomyces).